Reading from the N-terminus, the 105-residue chain is Death-associated protein 1 homolog (105 aa).

Positions 75–105 (AAQVAHQKPVPSAQKLPAGQHLNQHIHQPRK) are disordered. Positions 95-105 (HLNQHIHQPRK) are enriched in polar residues.

The protein belongs to the DAP-DAPL1 family. In terms of assembly, associates with ribosomes; inhibiting translation. Interacts with eiF5a (eif5a and eif5a2); inhibiting translation.

In terms of biological role, ribosome-binding protein involved in ribosome hibernation, a process during which ribosomes are stabilized in an inactive state and preserved from proteasomal degradation. Acts via its association with eiF5a (eif5a and eif5a2) at the polypeptide exit tunnel of the ribosome, preventing mRNA translation. Involved in ribosome hibernation in the mature egg by preventing mRNA translation, leading to ribosome inactivation. Ribosomes, which are produced in large quantities during oogenesis, are stored and translationally repressed in the egg and early embryo. Compared to dap1b, binds and inactivates ribosomes less efficiently. The polypeptide is Death-associated protein 1 homolog (Danio rerio (Zebrafish)).